Consider the following 213-residue polypeptide: Probable RNA 2'-phosphotransferase (213 aa).

It belongs to the KptA/TPT1 family.

In terms of biological role, removes the 2'-phosphate from RNA via an intermediate in which the phosphate is ADP-ribosylated by NAD followed by a presumed transesterification to release the RNA and generate ADP-ribose 1''-2''-cyclic phosphate (APPR&gt;P). May function as an ADP-ribosylase. This chain is Probable RNA 2'-phosphotransferase, found in Pyrobaculum aerophilum (strain ATCC 51768 / DSM 7523 / JCM 9630 / CIP 104966 / NBRC 100827 / IM2).